Reading from the N-terminus, the 191-residue chain is MADAVNAQTPSLSEQYHLEKEVKQDTSAKPVEVKEVAPEVTTQAEEVKTEQAKEESPVEEAVSVVEEKSESAPESTEVASEAPAAAEDNAEETPAAAEENNDENASEEVAEETPDEIKLETAPADFRFPTTNQTRHCFTRYVEYHRCVAAKGDDAPECDKFAKFYRSLCPSEWVDRWNEQRENGTFPGPLP.

Positions 1–14 (MADAVNAQTPSLSE) are enriched in polar residues. The disordered stretch occupies residues 1-126 (MADAVNAQTP…IKLETAPADF (126 aa)). Ala2 bears the N-acetylalanine mark. Composition is skewed to basic and acidic residues over residues 16–37 (YHLE…KEVA) and 45–56 (EEVKTEQAKEES). Low complexity predominate over residues 72-98 (APESTEVASEAPAAAEDNAEETPAAAE). Acidic residues predominate over residues 99 to 114 (ENNDENASEEVAEETP). A CHCH domain is found at 134–177 (TRHCFTRYVEYHRCVAAKGDDAPECDKFAKFYRSLCPSEWVDRW). The Cx9C motif motif lies at 137–147 (CFTRYVEYHRC). Cystine bridges form between Cys137-Cys169 and Cys147-Cys158. The Cx10C motif signature appears at 158–169 (CDKFAKFYRSLC).

This sequence belongs to the cytochrome c oxidase subunit 6B (TC 3.D.4.8) family. As to expression, expressed in the whole plant.

The protein localises to the mitochondrion. Its function is as follows. This protein is one of the nuclear-coded polypeptide chains of cytochrome c oxidase, the terminal oxidase in mitochondrial electron transport. This protein may be one of the heme-binding subunits of the oxidase. This chain is Cytochrome c oxidase subunit 6b-1 (COX6B-1), found in Arabidopsis thaliana (Mouse-ear cress).